The chain runs to 630 residues: Prolactin receptor (630 aa).

Residues 1-23 (MMTKVGEVLLLLLLPAFVPHTDG) form the signal peptide. The Extracellular segment spans residues 24–234 (THYSLPGKPT…VKVPEYLHRE (211 aa)). 2 consecutive Fibronectin type-III domains span residues 31–128 (KPTE…IVQP) and 130–230 (PPEK…VPEY). Disulfide bonds link Cys-37–Cys-47 and Cys-76–Cys-87. Residues Asn-92 and Asn-101 are each glycosylated (N-linked (GlcNAc...) asparagine). Zn(2+) contacts are provided by Asp-212 and His-213. Residues 216-220 (WSEWS) carry the WSXWS motif motif. Residues 235–258 (KSVWILVLVFSAFILLLLTWLIHM) traverse the membrane as a helical segment. Over 259–630 (NSHSLKHCML…DTATVFSVHT (372 aa)) the chain is Cytoplasmic. The Box 1 motif signature appears at 267-275 (MLPPVPGPK). Positions 339 to 389 (KSIGSASDSDSGRGSCDSDNLLMDKSGAPKEEQQQQNQEGDQIGKETQGPK) are disordered. The span at 340–357 (SIGSASDSDSGRGSCDSD) shows a compositional bias: low complexity. Basic and acidic residues predominate over residues 380–389 (QIGKETQGPK).

The protein belongs to the type I cytokine receptor family. Type 1 subfamily.

The protein localises to the membrane. Functionally, this is a receptor for the anterior pituitary hormone prolactin. The protein is Prolactin receptor (prlr) of Oreochromis niloticus (Nile tilapia).